The chain runs to 134 residues: Putative pre-16S rRNA nuclease (134 aa).

This sequence belongs to the YqgF nuclease family.

The protein resides in the cytoplasm. Could be a nuclease involved in processing of the 5'-end of pre-16S rRNA. This chain is Putative pre-16S rRNA nuclease, found in Helicobacter pylori (strain ATCC 700392 / 26695) (Campylobacter pylori).